The primary structure comprises 281 residues: Pantothenate synthetase (281 aa).

30–37 (MGNLHQGH) contacts ATP. His-37 serves as the catalytic Proton donor. Gln-61 lines the (R)-pantoate pocket. Beta-alanine is bound at residue Gln-61. ATP is bound at residue 149 to 152 (GNKD). Gln-155 is a (R)-pantoate binding site. ATP contacts are provided by residues Ile-178 and 186–189 (MSSR).

This sequence belongs to the pantothenate synthetase family. In terms of assembly, homodimer.

The protein localises to the cytoplasm. It carries out the reaction (R)-pantoate + beta-alanine + ATP = (R)-pantothenate + AMP + diphosphate + H(+). It functions in the pathway cofactor biosynthesis; (R)-pantothenate biosynthesis; (R)-pantothenate from (R)-pantoate and beta-alanine: step 1/1. Functionally, catalyzes the condensation of pantoate with beta-alanine in an ATP-dependent reaction via a pantoyl-adenylate intermediate. This Shewanella sp. (strain MR-7) protein is Pantothenate synthetase.